The primary structure comprises 386 residues: Delta(7)-sterol 5(6)-desaturase (386 aa).

Transmembrane regions (helical) follow at residues 119–139 (VLSLFIITTLFGWLLYFIVAY), 172–192 (IPVMVLLTIPFFLLELHGYSF), and 206–226 (AILWQIPKFILFTDCGIYFLH). One can recognise a Fatty acid hydroxylase domain in the interval 214 to 337 (FILFTDCGIY…FTTLWDRLGN (124 aa)). The short motif at 226–230 (HRWLH) is the Histidine box-1 element. A Histidine box-2 motif is present at residues 239-243 (HKPHH). The chain crosses the membrane as a helical span at residues 272–292 (PLLFPLHKVLYLLLFTFVNFW). A Histidine box-3 motif is present at residues 314–318 (HTVHH).

Belongs to the sterol desaturase family. Fe cation serves as cofactor.

Its subcellular location is the endoplasmic reticulum membrane. The enzyme catalyses a Delta(7)-sterol + 2 Fe(II)-[cytochrome b5] + O2 + 2 H(+) = a Delta(5),Delta(7)-sterol + 2 Fe(III)-[cytochrome b5] + 2 H2O. It functions in the pathway steroid metabolism; ergosterol biosynthesis; ergosterol from zymosterol: step 3/5. Catalyzes the introduction of a C-5 double bond in the B ring of ergosterol. May contribute to the regulation of ergosterol biosynthesis. This chain is Delta(7)-sterol 5(6)-desaturase (ERG3), found in Candida dubliniensis (strain CD36 / ATCC MYA-646 / CBS 7987 / NCPF 3949 / NRRL Y-17841) (Yeast).